Reading from the N-terminus, the 152-residue chain is Transcriptional repressor NrdR (152 aa).

Residues 3–34 (CPYCQHPDSDVIDTRKLHNGETIRRRRKCEAC) fold into a zinc finger. The region spanning 49–139 (ITVVKKNGER…VYRSFADIGK (91 aa)) is the ATP-cone domain.

It belongs to the NrdR family. Requires Zn(2+) as cofactor.

In terms of biological role, negatively regulates transcription of bacterial ribonucleotide reductase nrd genes and operons by binding to NrdR-boxes. In Roseiflexus castenholzii (strain DSM 13941 / HLO8), this protein is Transcriptional repressor NrdR.